Consider the following 278-residue polypeptide: Acyl-[acyl-carrier-protein]--UDP-N-acetylglucosamine O-acyltransferase (278 aa).

Belongs to the transferase hexapeptide repeat family. LpxA subfamily. As to quaternary structure, homotrimer.

It localises to the cytoplasm. The enzyme catalyses a (3R)-hydroxyacyl-[ACP] + UDP-N-acetyl-alpha-D-glucosamine = a UDP-3-O-[(3R)-3-hydroxyacyl]-N-acetyl-alpha-D-glucosamine + holo-[ACP]. It participates in glycolipid biosynthesis; lipid IV(A) biosynthesis; lipid IV(A) from (3R)-3-hydroxytetradecanoyl-[acyl-carrier-protein] and UDP-N-acetyl-alpha-D-glucosamine: step 1/6. In terms of biological role, involved in the biosynthesis of lipid A, a phosphorylated glycolipid that anchors the lipopolysaccharide to the outer membrane of the cell. The sequence is that of Acyl-[acyl-carrier-protein]--UDP-N-acetylglucosamine O-acyltransferase from Brucella anthropi (strain ATCC 49188 / DSM 6882 / CCUG 24695 / JCM 21032 / LMG 3331 / NBRC 15819 / NCTC 12168 / Alc 37) (Ochrobactrum anthropi).